Here is a 240-residue protein sequence, read N- to C-terminus: MSLNKTIYEGKAKAIIETEDLSIVIQHFKDDVTAFNKEKYEIIDGKGIINNHISAFIMEKLEKAEISTHFIKTLNEREQLVKKLKIIPLEVVVRNVAAGSFCKRFNIKEGERLASPIIDFFYKNDDLADPMVSENHILYFDWLSSKEMDEVKTTTLKINEILVHLFSNASIYLVDLKLEFGRLINDSTKIVLADEISPDNCRLWDKNTYKKLDKDVFRLNLGDLKEAYLEVAKRLSVKLG.

It belongs to the SAICAR synthetase family.

The catalysed reaction is 5-amino-1-(5-phospho-D-ribosyl)imidazole-4-carboxylate + L-aspartate + ATP = (2S)-2-[5-amino-1-(5-phospho-beta-D-ribosyl)imidazole-4-carboxamido]succinate + ADP + phosphate + 2 H(+). It functions in the pathway purine metabolism; IMP biosynthesis via de novo pathway; 5-amino-1-(5-phospho-D-ribosyl)imidazole-4-carboxamide from 5-amino-1-(5-phospho-D-ribosyl)imidazole-4-carboxylate: step 1/2. This chain is Phosphoribosylaminoimidazole-succinocarboxamide synthase, found in Wolbachia pipientis wMel.